The following is a 151-amino-acid chain: MTESSFKLAIVVSQFNRAVTEKLLNGVLQRLTELDVQANQIKTVWVPGAVEIPLLAKRLAKSKHYQAIVCLGAVIRGETDHYNYVCQQVSFGCQQVALEYEVPIIFGVLTTTTKEQAFARAGGERGNKGADWADAAVSMIKLMKEIEITDE.

Residues Phe15, 49–51, and 73–75 contribute to the 5-amino-6-(D-ribitylamino)uracil site; these read AVE and AVI. 78 to 79 lines the (2S)-2-hydroxy-3-oxobutyl phosphate pocket; it reads ET. Residue His81 is the Proton donor of the active site. Position 106 (Phe106) interacts with 5-amino-6-(D-ribitylamino)uracil. (2S)-2-hydroxy-3-oxobutyl phosphate is bound at residue Arg120.

The protein belongs to the DMRL synthase family. In terms of assembly, forms an icosahedral capsid composed of 60 subunits, arranged as a dodecamer of pentamers.

It carries out the reaction (2S)-2-hydroxy-3-oxobutyl phosphate + 5-amino-6-(D-ribitylamino)uracil = 6,7-dimethyl-8-(1-D-ribityl)lumazine + phosphate + 2 H2O + H(+). The protein operates within cofactor biosynthesis; riboflavin biosynthesis; riboflavin from 2-hydroxy-3-oxobutyl phosphate and 5-amino-6-(D-ribitylamino)uracil: step 1/2. Functionally, catalyzes the formation of 6,7-dimethyl-8-ribityllumazine by condensation of 5-amino-6-(D-ribitylamino)uracil with 3,4-dihydroxy-2-butanone 4-phosphate. This is the penultimate step in the biosynthesis of riboflavin. This is 6,7-dimethyl-8-ribityllumazine synthase from Coxiella burnetii (strain Dugway 5J108-111).